The sequence spans 155 residues: Endoribonuclease YbeY (155 aa).

Zn(2+)-binding residues include histidine 114, histidine 118, and histidine 124.

This sequence belongs to the endoribonuclease YbeY family. Requires Zn(2+) as cofactor.

The protein resides in the cytoplasm. In terms of biological role, single strand-specific metallo-endoribonuclease involved in late-stage 70S ribosome quality control and in maturation of the 3' terminus of the 16S rRNA. This Escherichia coli O81 (strain ED1a) protein is Endoribonuclease YbeY.